The primary structure comprises 176 residues: Ribosome maturation factor RimM (176 aa).

One can recognise a PRC barrel domain in the interval 93-168 (DDEVYIEDIL…TIRITPPPGL (76 aa)).

It belongs to the RimM family. As to quaternary structure, binds ribosomal protein uS19.

The protein localises to the cytoplasm. In terms of biological role, an accessory protein needed during the final step in the assembly of 30S ribosomal subunit, possibly for assembly of the head region. Essential for efficient processing of 16S rRNA. May be needed both before and after RbfA during the maturation of 16S rRNA. It has affinity for free ribosomal 30S subunits but not for 70S ribosomes. The sequence is that of Ribosome maturation factor RimM from Oleidesulfovibrio alaskensis (strain ATCC BAA-1058 / DSM 17464 / G20) (Desulfovibrio alaskensis).